The sequence spans 324 residues: tRNA-cytidine(32) 2-sulfurtransferase (324 aa).

The disordered stretch occupies residues 1-26; that stretch reads MQDLIDSPTAARTPAEEKIRHEGNKL. Basic and acidic residues predominate over residues 14 to 26; sequence PAEEKIRHEGNKL. Residues 55–60 carry the PP-loop motif motif; that stretch reads SGGKDS. Residues cysteine 130, cysteine 133, and cysteine 221 each contribute to the [4Fe-4S] cluster site. Positions 278-310 are disordered; it reads RPDANGDTAFDPIDPEDPREDAGDACASSPADG.

It belongs to the TtcA family. Homodimer. It depends on Mg(2+) as a cofactor. [4Fe-4S] cluster serves as cofactor.

The protein localises to the cytoplasm. The enzyme catalyses cytidine(32) in tRNA + S-sulfanyl-L-cysteinyl-[cysteine desulfurase] + AH2 + ATP = 2-thiocytidine(32) in tRNA + L-cysteinyl-[cysteine desulfurase] + A + AMP + diphosphate + H(+). It participates in tRNA modification. Catalyzes the ATP-dependent 2-thiolation of cytidine in position 32 of tRNA, to form 2-thiocytidine (s(2)C32). The sulfur atoms are provided by the cysteine/cysteine desulfurase (IscS) system. The chain is tRNA-cytidine(32) 2-sulfurtransferase from Bordetella petrii (strain ATCC BAA-461 / DSM 12804 / CCUG 43448).